The primary structure comprises 204 residues: Guanylate kinase (204 aa).

Residues 16 to 196 enclose the Guanylate kinase-like domain; that stretch reads AKVIIFSAPS…AKAHALKVIK (181 aa). 23-30 contributes to the ATP binding site; the sequence is APSGSGKS.

Belongs to the guanylate kinase family.

It is found in the cytoplasm. It carries out the reaction GMP + ATP = GDP + ADP. Its function is as follows. Essential for recycling GMP and indirectly, cGMP. The chain is Guanylate kinase from Bacteroides fragilis (strain ATCC 25285 / DSM 2151 / CCUG 4856 / JCM 11019 / LMG 10263 / NCTC 9343 / Onslow / VPI 2553 / EN-2).